Here is a 62-residue protein sequence, read N- to C-terminus: MKSIRCKNCNKLLFKADSFDHIEIRCPRCKRHIIMLNACEHPTEKHCGKREKITHSDETVCY.

Belongs to the com family.

The chain is Cryptic Mu-phage protein com from Shigella dysenteriae.